Consider the following 116-residue polypeptide: Large ribosomal subunit protein bL20 (116 aa).

The protein belongs to the bacterial ribosomal protein bL20 family.

In terms of biological role, binds directly to 23S ribosomal RNA and is necessary for the in vitro assembly process of the 50S ribosomal subunit. It is not involved in the protein synthesizing functions of that subunit. This is Large ribosomal subunit protein bL20 from Hydrogenobaculum sp. (strain Y04AAS1).